Here is a 295-residue protein sequence, read N- to C-terminus: Phosphoribosylaminoimidazole-succinocarboxamide synthase (295 aa).

The protein belongs to the SAICAR synthetase family.

It carries out the reaction 5-amino-1-(5-phospho-D-ribosyl)imidazole-4-carboxylate + L-aspartate + ATP = (2S)-2-[5-amino-1-(5-phospho-beta-D-ribosyl)imidazole-4-carboxamido]succinate + ADP + phosphate + 2 H(+). The protein operates within purine metabolism; IMP biosynthesis via de novo pathway; 5-amino-1-(5-phospho-D-ribosyl)imidazole-4-carboxamide from 5-amino-1-(5-phospho-D-ribosyl)imidazole-4-carboxylate: step 1/2. The polypeptide is Phosphoribosylaminoimidazole-succinocarboxamide synthase (Desulforapulum autotrophicum (strain ATCC 43914 / DSM 3382 / VKM B-1955 / HRM2) (Desulfobacterium autotrophicum)).